The primary structure comprises 593 residues: Maternal uncoordinated protein 2 (593 aa).

It belongs to the SCC4/mau-2 family. In terms of assembly, may heterodimerize with scc-2/SCC2 to form the cohesin loading complex.

The protein localises to the nucleus. The protein resides in the nucleoplasm. It localises to the cytoplasm. Plays an important role in the loading of the cohesin complex on to DNA. Forms a heterodimeric complex (also known as cohesin loading complex) with scc-2/SCC2 which mediates the loading of the cohesin complex onto chromatin. Required for normal development until the fourth larval stage. Functions cell autonomously to guide migrations during the development of the nervous system. Participates in the guidance of mechanosensory neuron AVM by a slt-1-independent mechanism. Regulates chromosome segregation in early embryos. The chain is Maternal uncoordinated protein 2 from Caenorhabditis elegans.